The primary structure comprises 336 residues: Ultraviolet-sensitive opsin (336 aa).

At 1-29 (MDAWTYQFGNLSKISPFEGPQYHLAPKWA) the chain is on the extracellular side. N-linked (GlcNAc...) asparagine glycosylation is present at asparagine 10. Residues 30-54 (FYLQAAFMGFVFFVGTPLNAIVLFV) form a helical membrane-spanning segment. The Cytoplasmic segment spans residues 55-66 (TMKYKKLRQPLN). A helical transmembrane segment spans residues 67–91 (YILVNISLGGFIFDTFSVSQVFFSA). At 92–106 (LRGYYFFGYTLCAME) the chain is on the extracellular side. A disulfide bond links cysteine 103 and cysteine 180. A helical transmembrane segment spans residues 107 to 126 (AAMGSIAGLVTGWSLAVLAF). The Cytoplasmic segment spans residues 127 to 145 (ERYVVICKPFGSFKFGQSQ). A helical membrane pass occupies residues 146 to 169 (ALGAVALTWIIGIGCATPPFWGWS). Topologically, residues 170 to 195 (RYIPEGIGTACGPDWYTKNEEYNTES) are extracellular. The helical transmembrane segment at 196 to 223 (YTYFLLVSCFMMPIMIITFSYSQLLGAL) threads the bilayer. Topologically, residues 224-245 (RAVAAQQAESASTQKAEKEVSR) are cytoplasmic. Residues 246 to 269 (MVVVMVGSFVVCYGPYAITALYFS) form a helical membrane-spanning segment. At 270–277 (YAEDSNKD) the chain is on the extracellular side. A helical membrane pass occupies residues 278 to 302 (YRLVAIPSLFSKSSCVYNPLIYAFM). Lysine 289 carries the post-translational modification N6-(retinylidene)lysine. Residues 303 to 336 (NKQFNACIMETVFGKKIDESSEVSSKTETSSVSA) are Cytoplasmic-facing.

The protein belongs to the G-protein coupled receptor 1 family. Opsin subfamily. Phosphorylated on some or all of the serine and threonine residues present in the C-terminal region.

It is found in the membrane. In terms of biological role, visual pigments are the light-absorbing molecules that mediate vision. They consist of an apoprotein, opsin, covalently linked to cis-retinal. The polypeptide is Ultraviolet-sensitive opsin (Carassius auratus (Goldfish)).